The primary structure comprises 383 residues: 1-deoxy-D-xylulose 5-phosphate reductoisomerase (383 aa).

Residues T10, G11, S12, I13, and N123 each coordinate NADPH. A 1-deoxy-D-xylulose 5-phosphate-binding site is contributed by K124. Residue E125 participates in NADPH binding. Position 149 (D149) interacts with Mn(2+). Residues S150, E151, S175, and H198 each contribute to the 1-deoxy-D-xylulose 5-phosphate site. Residue E151 coordinates Mn(2+). G204 lines the NADPH pocket. Residues S211, N216, K217, and E220 each contribute to the 1-deoxy-D-xylulose 5-phosphate site. Residue E220 participates in Mn(2+) binding.

It belongs to the DXR family. The cofactor is Mg(2+). Mn(2+) is required as a cofactor.

The catalysed reaction is 2-C-methyl-D-erythritol 4-phosphate + NADP(+) = 1-deoxy-D-xylulose 5-phosphate + NADPH + H(+). The protein operates within isoprenoid biosynthesis; isopentenyl diphosphate biosynthesis via DXP pathway; isopentenyl diphosphate from 1-deoxy-D-xylulose 5-phosphate: step 1/6. Its function is as follows. Catalyzes the NADPH-dependent rearrangement and reduction of 1-deoxy-D-xylulose-5-phosphate (DXP) to 2-C-methyl-D-erythritol 4-phosphate (MEP). This chain is 1-deoxy-D-xylulose 5-phosphate reductoisomerase, found in Desulfosudis oleivorans (strain DSM 6200 / JCM 39069 / Hxd3) (Desulfococcus oleovorans).